The chain runs to 117 residues: Large ribosomal subunit protein uL18 (117 aa).

It belongs to the universal ribosomal protein uL18 family. Part of the 50S ribosomal subunit; part of the 5S rRNA/L5/L18/L25 subcomplex. Contacts the 5S and 23S rRNAs.

In terms of biological role, this is one of the proteins that bind and probably mediate the attachment of the 5S RNA into the large ribosomal subunit, where it forms part of the central protuberance. The sequence is that of Large ribosomal subunit protein uL18 from Halorhodospira halophila (strain DSM 244 / SL1) (Ectothiorhodospira halophila (strain DSM 244 / SL1)).